We begin with the raw amino-acid sequence, 390 residues long: Methylthioribose-1-phosphate isomerase (390 aa).

Asp263 acts as the Proton donor in catalysis.

Belongs to the eIF-2B alpha/beta/delta subunits family. MtnA subfamily.

The protein localises to the cytoplasm. The protein resides in the nucleus. The enzyme catalyses 5-(methylsulfanyl)-alpha-D-ribose 1-phosphate = 5-(methylsulfanyl)-D-ribulose 1-phosphate. The protein operates within amino-acid biosynthesis; L-methionine biosynthesis via salvage pathway; L-methionine from S-methyl-5-thio-alpha-D-ribose 1-phosphate: step 1/6. In terms of biological role, catalyzes the interconversion of methylthioribose-1-phosphate (MTR-1-P) into methylthioribulose-1-phosphate (MTRu-1-P). The chain is Methylthioribose-1-phosphate isomerase from Meyerozyma guilliermondii (strain ATCC 6260 / CBS 566 / DSM 6381 / JCM 1539 / NBRC 10279 / NRRL Y-324) (Yeast).